The sequence spans 253 residues: Glucosamine-6-phosphate deaminase (253 aa).

The active-site Proton acceptor; for enolization step is the D65. N133 (for ring-opening step) is an active-site residue. Catalysis depends on H135, which acts as the Proton acceptor; for ring-opening step. Catalysis depends on E140, which acts as the For ring-opening step.

The protein belongs to the glucosamine/galactosamine-6-phosphate isomerase family. NagB subfamily.

The enzyme catalyses alpha-D-glucosamine 6-phosphate + H2O = beta-D-fructose 6-phosphate + NH4(+). Its pathway is amino-sugar metabolism; N-acetylneuraminate degradation; D-fructose 6-phosphate from N-acetylneuraminate: step 5/5. Its function is as follows. Catalyzes the reversible isomerization-deamination of glucosamine 6-phosphate (GlcN6P) to form fructose 6-phosphate (Fru6P) and ammonium ion. This Corynebacterium glutamicum (strain R) protein is Glucosamine-6-phosphate deaminase.